A 392-amino-acid chain; its full sequence is Formate-dependent phosphoribosylglycinamide formyltransferase (392 aa).

N(1)-(5-phospho-beta-D-ribosyl)glycinamide contacts are provided by residues 22-23 (EL) and Glu-82. Residues Arg-114, Lys-155, 160-165 (SSGKGQ), 195-198 (EGVV), and Glu-203 each bind ATP. Residues 119–308 (RLAAEELGLP…EFALHVRAFL (190 aa)) form the ATP-grasp domain. Residues Glu-267 and Glu-279 each coordinate Mg(2+). Residues Asp-286, Lys-355, and 362 to 363 (RR) contribute to the N(1)-(5-phospho-beta-D-ribosyl)glycinamide site.

The protein belongs to the PurK/PurT family. Homodimer.

The enzyme catalyses N(1)-(5-phospho-beta-D-ribosyl)glycinamide + formate + ATP = N(2)-formyl-N(1)-(5-phospho-beta-D-ribosyl)glycinamide + ADP + phosphate + H(+). The protein operates within purine metabolism; IMP biosynthesis via de novo pathway; N(2)-formyl-N(1)-(5-phospho-D-ribosyl)glycinamide from N(1)-(5-phospho-D-ribosyl)glycinamide (formate route): step 1/1. Involved in the de novo purine biosynthesis. Catalyzes the transfer of formate to 5-phospho-ribosyl-glycinamide (GAR), producing 5-phospho-ribosyl-N-formylglycinamide (FGAR). Formate is provided by PurU via hydrolysis of 10-formyl-tetrahydrofolate. This chain is Formate-dependent phosphoribosylglycinamide formyltransferase, found in Salmonella typhimurium (strain LT2 / SGSC1412 / ATCC 700720).